Here is a 584-residue protein sequence, read N- to C-terminus: Probable terpene synthase 9 (584 aa).

Residues Asp339, Asp343, and Glu491 each coordinate Mg(2+). Residues 339-343 (DDMYD) carry the DDXXD motif motif.

This sequence belongs to the terpene synthase family. The cofactor is Mg(2+).

In terms of biological role, probable sesquiterpene synthase. The sequence is that of Probable terpene synthase 9 (TPS9) from Ricinus communis (Castor bean).